A 98-amino-acid polypeptide reads, in one-letter code: NADH-ubiquinone oxidoreductase chain 4L (98 aa).

3 consecutive transmembrane segments (helical) span residues M1–I21, S29–L49, and I61–V81.

This sequence belongs to the complex I subunit 4L family. As to quaternary structure, core subunit of respiratory chain NADH dehydrogenase (Complex I) which is composed of 45 different subunits.

Its subcellular location is the mitochondrion inner membrane. It carries out the reaction a ubiquinone + NADH + 5 H(+)(in) = a ubiquinol + NAD(+) + 4 H(+)(out). Functionally, core subunit of the mitochondrial membrane respiratory chain NADH dehydrogenase (Complex I) which catalyzes electron transfer from NADH through the respiratory chain, using ubiquinone as an electron acceptor. Part of the enzyme membrane arm which is embedded in the lipid bilayer and involved in proton translocation. The protein is NADH-ubiquinone oxidoreductase chain 4L (MT-ND4L) of Ursus americanus (American black bear).